Here is a 244-residue protein sequence, read N- to C-terminus: tRNA pseudouridine synthase A (244 aa).

Asp-52 (nucleophile) is an active-site residue. Tyr-110 is a binding site for substrate.

This sequence belongs to the tRNA pseudouridine synthase TruA family. As to quaternary structure, homodimer.

It catalyses the reaction uridine(38/39/40) in tRNA = pseudouridine(38/39/40) in tRNA. Its function is as follows. Formation of pseudouridine at positions 38, 39 and 40 in the anticodon stem and loop of transfer RNAs. The protein is tRNA pseudouridine synthase A of Acetivibrio thermocellus (strain ATCC 27405 / DSM 1237 / JCM 9322 / NBRC 103400 / NCIMB 10682 / NRRL B-4536 / VPI 7372) (Clostridium thermocellum).